The sequence spans 90 residues: Probable Fe(2+)-trafficking protein (90 aa).

This sequence belongs to the Fe(2+)-trafficking protein family.

In terms of biological role, could be a mediator in iron transactions between iron acquisition and iron-requiring processes, such as synthesis and/or repair of Fe-S clusters in biosynthetic enzymes. In Verminephrobacter eiseniae (strain EF01-2), this protein is Probable Fe(2+)-trafficking protein.